A 741-amino-acid polypeptide reads, in one-letter code: MAPRKNAKGGGGNSSSSGSGSGSGSGSPSTGSSGSSSSPGARREAKHGGHKNGRRGGISGGSFFTWFMVIALLGVWTSVAVVWFDLVDYEEVLGKLGVYDADGDGDFDVDDAKVLLGLKERSPSERTFPPEEEAETHAELEEQAPEGADIQNVEDEVKEQIQSLLQESVHTDHDLEADGLAGEPQPEVEDFLTVTDSDDRFEDLEPGTVHEEIEDTYHVEDTASQNHPNDMEEMTNEQENSDPSEAVTDAGVLLPHAEEVRHQDYDEPVYEPSEHEGVAISDNTIDDSSIISEEINVASVEEQQDTPPVKKKKPKLLNKFDKTIKAELDAAEKLRKRGKIEEAVNAFEELVRKYPQSPRARYGKAQCEDDLAEKQRSNEVLRRAIETYQEAADLPDAPTDLVKLSLKRRSERQQFLGHMRGSLLTLQRLVQLFPSDTTLKNDLGVGYLLLGDNDSAKKVYEEVLNVTPNDGFAKVHYGFILKAQNKISESIPYLKEGIESGDPGTDDGRFYFHLGDAMQRVGNKEAYKWYELGHKRGHFASVWQRSLYNVNGLKAQPWWTPRETGYTELVKSLERNWKLIRDEGLMVMDKAKGLFLPEDENLREKGDWSQFTLWQQGRKNENACKGAPKTCALLEKFSETTGCRRGQIKYSIMHPGTHVWPHTGPTNCRLRMHLGLVIPKEGCKIRCANETRTWEEGKVLIFDDSFEHEVWQDASSFRLIFIVDVWHPELTPQQRRSLPAI.

The tract at residues 1–54 is disordered; the sequence is MAPRKNAKGGGGNSSSSGSGSGSGSGSPSTGSSGSSSSPGARREAKHGGHKNGR. Residues 1 to 62 are Cytoplasmic-facing; it reads MAPRKNAKGG…GRRGGISGGS (62 aa). Positions 8–25 are enriched in gly residues; the sequence is KGGGGNSSSSGSGSGSGS. At Ser15 the chain carries Phosphoserine. Residues 26–40 are compositionally biased toward low complexity; the sequence is GSPSTGSSGSSSSPG. A helical; Signal-anchor for type II membrane protein transmembrane segment spans residues 63–83; it reads FFTWFMVIALLGVWTSVAVVW. The Lumenal segment spans residues 84–741; sequence FDLVDYEEVL…PQQRRSLPAI (658 aa). Ca(2+)-binding residues include Asp100, Asp102, Asp104, Asp106, and Asp111. 2 disordered regions span residues 120-141 and 222-244; these read ERSP…AELE and TASQ…SDPS. Residues 231–242 show a composition bias toward acidic residues; that stretch reads MEEMTNEQENSD. TPR repeat units follow at residues 324–357, 365–398, 437–470, 472–504, and 508–540; these read IKAE…YPQS, AQCE…PDAP, TTLK…TPND, FAKV…GDPG, and GRFY…GHFA. Residue Asn453 is glycosylated (N-linked (GlcNAc...) asparagine). 2-oxoglutarate is bound at residue Trp608. An intrachain disulfide couples Cys624 to Cys631. Ser651 serves as a coordination point for 2-oxoglutarate. A Fe cation-binding site is contributed by His662. 671–673 serves as a coordination point for 2-oxoglutarate; the sequence is RMH. Residue Asn689 is glycosylated (N-linked (GlcNAc...) asparagine). Residue His708 participates in Fe cation binding. A 2-oxoglutarate-binding site is contributed by Arg718.

It belongs to the aspartyl/asparaginyl beta-hydroxylase family. In terms of assembly, monomer. Isoform 2 interacts with CASQ2. Requires Fe cation as cofactor. Isoform 1 is detected in heart, liver and ovary (at protein level). Detected in heart ventricle. Isoform 1 is widely expressed. Isoform 2 is detected in heart and skeletal muscle.

The protein resides in the endoplasmic reticulum membrane. Its subcellular location is the sarcoplasmic reticulum membrane. It carries out the reaction L-aspartyl-[protein] + 2-oxoglutarate + O2 = 3-hydroxy-L-aspartyl-[protein] + succinate + CO2. Functionally, specifically hydroxylates an Asp or Asn residue in certain epidermal growth factor-like (EGF) domains of a number of proteins. This chain is Aspartyl/asparaginyl beta-hydroxylase (Asph), found in Mus musculus (Mouse).